The following is a 68-amino-acid chain: Conotoxin Mi11.1 (68 aa).

The N-terminal stretch at 1 to 26 (MMLRLTSVSCFLLVIACLNLFQVVLT) is a signal peptide. Intrachain disulfides connect cysteine 29-cysteine 43, cysteine 36-cysteine 48, cysteine 42-cysteine 52, and cysteine 47-cysteine 56. Tyrosine 60 bears the Tyrosine amide mark. Positions 64–68 (ATFQE) are excised as a propeptide.

Belongs to the conotoxin I2 superfamily. As to expression, expressed by the venom duct.

It localises to the secreted. The sequence is that of Conotoxin Mi11.1 from Conus miles (Soldier cone).